A 352-amino-acid chain; its full sequence is MRKIIHVDMDCFFAAVEMRDDPSLRDIPIAIGGSRDRRGVISTANYPARRYGVRSAMPTAMALKLCPQLKVIPGRMAAYKEASQHIREIFARYTPLIEPLSLDEAYLDVSDCQACSGSATLIAQEIRQAIAMELNLTASAGIAPIKFLAKIASDLNKPNGQYVITPDQVLPFLRDLPLSKIPGVGKVTAKRLQELGLITCSDVQNYSQAELLKRFGKFGHVLWERSHGIDEREVSPDRLRKSVGVEQTLAEDIHDWESCESLIEKLYIELETRLRKVRPDLHIARQGVKLKFHDFQQTTQEHVWPQLNKADLLQVARTAWNERRAGRGVRLVGLHVTLLDPQLERQLLLSWE.

In terms of domain architecture, UmuC spans 4 to 185; sequence IIHVDMDCFF…LPLSKIPGVG (182 aa). Residues Asp8 and Asp103 each contribute to the Mg(2+) site. The active site involves Glu104.

The protein belongs to the DNA polymerase type-Y family. In terms of assembly, monomer. It depends on Mg(2+) as a cofactor.

The protein localises to the cytoplasm. It carries out the reaction DNA(n) + a 2'-deoxyribonucleoside 5'-triphosphate = DNA(n+1) + diphosphate. Functionally, poorly processive, error-prone DNA polymerase involved in untargeted mutagenesis. Copies undamaged DNA at stalled replication forks, which arise in vivo from mismatched or misaligned primer ends. These misaligned primers can be extended by PolIV. Exhibits no 3'-5' exonuclease (proofreading) activity. May be involved in translesional synthesis, in conjunction with the beta clamp from PolIII. The polypeptide is DNA polymerase IV (Yersinia enterocolitica serotype O:8 / biotype 1B (strain NCTC 13174 / 8081)).